Here is a 255-residue protein sequence, read N- to C-terminus: MKVKVFDLNGQPVGEIELPKVFFTPFRPDLIRRAVIASWTHRIQPQGRDPMAGKRRVTENIGKGHSMARVERLKTPPRYAAFVPFARGGRRTHPPKVEKIIWEDINKKEKRLALMSAIAATANYDLVRARGHIIDNVPQLPLIVVDDLQKVQKTRETREIFKKLGIWDDIVRAKEKSGVRAGKGKMRGRRYKKAKGPLIVVGKNEGIVLGARNHPGVDVVVVDNLGVEHLAPGTHPGRLTVWTVSAIERLRELYG.

It belongs to the universal ribosomal protein uL4 family. As to quaternary structure, part of the 50S ribosomal subunit.

In terms of biological role, one of the primary rRNA binding proteins, this protein initially binds near the 5'-end of the 23S rRNA. It is important during the early stages of 50S assembly. It makes multiple contacts with different domains of the 23S rRNA in the assembled 50S subunit and ribosome. Its function is as follows. Forms part of the polypeptide exit tunnel. This chain is Large ribosomal subunit protein uL4, found in Pyrococcus furiosus (strain ATCC 43587 / DSM 3638 / JCM 8422 / Vc1).